The sequence spans 352 residues: Isoflavone-7-O-methyltransferase 8 (352 aa).

118-127 (VLDPTLSGSY) is a binding site for substrate. S-adenosyl-L-methionine contacts are provided by G196, D219, D239, M240, and K253. Catalysis depends on H257, which acts as the Proton acceptor.

The protein belongs to the class I-like SAM-binding methyltransferase superfamily. Cation-independent O-methyltransferase family. COMT subfamily. As to quaternary structure, homodimer.

It catalyses the reaction a 7-hydroxyisoflavone + S-adenosyl-L-methionine = a 7-methoxyisoflavone + S-adenosyl-L-homocysteine + H(+). It participates in phytoalexin biosynthesis; medicarpin biosynthesis. Functionally, transfers a methyl group to 7-hydroxyls of the isoflavones daidzein, genistein and 6,7,4'-trihydroxyisoflavone. Can also methylate (+)6a-hydroxymaackiain with lower efficiency. In Medicago sativa (Alfalfa), this protein is Isoflavone-7-O-methyltransferase 8.